Reading from the N-terminus, the 344-residue chain is Dihydroorotase (344 aa).

Zn(2+) contacts are provided by histidine 14 and histidine 16. Residues 16-18 (HLR) and asparagine 42 each bind substrate. Zn(2+) is bound by residues lysine 99, histidine 136, and histidine 174. Position 99 is an N6-carboxylysine (lysine 99). A substrate-binding site is contributed by histidine 136. Leucine 219 is a binding site for substrate. A Zn(2+)-binding site is contributed by aspartate 247. Aspartate 247 is a catalytic residue. Positions 251 and 263 each coordinate substrate.

The protein belongs to the metallo-dependent hydrolases superfamily. DHOase family. Class II DHOase subfamily. Homodimer. The cofactor is Zn(2+).

The enzyme catalyses (S)-dihydroorotate + H2O = N-carbamoyl-L-aspartate + H(+). It functions in the pathway pyrimidine metabolism; UMP biosynthesis via de novo pathway; (S)-dihydroorotate from bicarbonate: step 3/3. Catalyzes the reversible cyclization of carbamoyl aspartate to dihydroorotate. This chain is Dihydroorotase, found in Teredinibacter turnerae (strain ATCC 39867 / T7901).